The following is a 278-amino-acid chain: Elongation factor Ts (278 aa).

The tract at residues 80–83 is involved in Mg(2+) ion dislocation from EF-Tu; it reads TDFV.

Belongs to the EF-Ts family.

The protein localises to the cytoplasm. In terms of biological role, associates with the EF-Tu.GDP complex and induces the exchange of GDP to GTP. It remains bound to the aminoacyl-tRNA.EF-Tu.GTP complex up to the GTP hydrolysis stage on the ribosome. The sequence is that of Elongation factor Ts from Pseudarthrobacter chlorophenolicus (strain ATCC 700700 / DSM 12829 / CIP 107037 / JCM 12360 / KCTC 9906 / NCIMB 13794 / A6) (Arthrobacter chlorophenolicus).